A 400-amino-acid chain; its full sequence is Iron(III) enterobactin esterase (400 aa).

The protein belongs to the Fes family. Monomer.

It localises to the cytoplasm. It catalyses the reaction Fe(III)-enterobactin + 3 H2O + H(+) = Fe(III)-[N-(2,3-dihydroxybenzoyl)-L-serine] + 2 N-(2,3-dihydroxybenzoyl)-L-serine. It carries out the reaction Fe(III)-enterobactin + H2O = Fe(III)-[N-(2,3-dihydroxybenzoyl)-L-serine]3 + H(+). The enzyme catalyses Fe(III)-[N-(2,3-dihydroxybenzoyl)-L-serine]3 + H2O + H(+) = Fe(III)-[N-(2,3-dihydroxybenzoyl)-L-serine]2 + N-(2,3-dihydroxybenzoyl)-L-serine. The catalysed reaction is Fe(III)-[N-(2,3-dihydroxybenzoyl)-L-serine]2 + H2O + H(+) = Fe(III)-[N-(2,3-dihydroxybenzoyl)-L-serine] + N-(2,3-dihydroxybenzoyl)-L-serine. It catalyses the reaction enterobactin + 3 H2O = 3 N-(2,3-dihydroxybenzoyl)-L-serine + 2 H(+). Its activity is regulated as follows. Inhibited by N-ethylmaleimide. Functionally, catalyzes the hydrolysis of ferric enterobactin (Fe-Ent). Is responsible for the release of iron from ferric enterobactin. Also catalyzes the hydrolysis of iron-free enterobactin (Ent). Cleavage of ferric enterobactin results in a mixture of three hydrolysis products, 2,3-dihydroxybenzoylserine (DHBS), the linear dimer (DHBS)2 and the linear trimer (DHBS)3, while cleavage of iron-free enterobactin yields only the monomer. Hydrolysis of ferric enterobactin is less efficient than hydrolysis of unliganded enterobactin. It also cleaves the aluminum (III) complex at a rate similar to the ferric complex. This chain is Iron(III) enterobactin esterase, found in Escherichia coli (strain K12).